Reading from the N-terminus, the 346-residue chain is Phosphoribosylformylglycinamidine cyclo-ligase (346 aa).

This sequence belongs to the AIR synthase family.

The protein resides in the cytoplasm. The catalysed reaction is 2-formamido-N(1)-(5-O-phospho-beta-D-ribosyl)acetamidine + ATP = 5-amino-1-(5-phospho-beta-D-ribosyl)imidazole + ADP + phosphate + H(+). It participates in purine metabolism; IMP biosynthesis via de novo pathway; 5-amino-1-(5-phospho-D-ribosyl)imidazole from N(2)-formyl-N(1)-(5-phospho-D-ribosyl)glycinamide: step 2/2. This Geobacillus sp. (strain WCH70) protein is Phosphoribosylformylglycinamidine cyclo-ligase.